Here is a 271-residue protein sequence, read N- to C-terminus: Tryptophan synthase alpha chain (271 aa).

Catalysis depends on proton acceptor residues Glu49 and Asp60.

This sequence belongs to the TrpA family. In terms of assembly, tetramer of two alpha and two beta chains.

The catalysed reaction is (1S,2R)-1-C-(indol-3-yl)glycerol 3-phosphate + L-serine = D-glyceraldehyde 3-phosphate + L-tryptophan + H2O. The protein operates within amino-acid biosynthesis; L-tryptophan biosynthesis; L-tryptophan from chorismate: step 5/5. Functionally, the alpha subunit is responsible for the aldol cleavage of indoleglycerol phosphate to indole and glyceraldehyde 3-phosphate. The chain is Tryptophan synthase alpha chain from Burkholderia pseudomallei (strain K96243).